The sequence spans 368 residues: DNA replication and repair protein RecF (368 aa).

30-37 (GRNGSGKT) serves as a coordination point for ATP.

The protein belongs to the RecF family.

Its subcellular location is the cytoplasm. In terms of biological role, the RecF protein is involved in DNA metabolism; it is required for DNA replication and normal SOS inducibility. RecF binds preferentially to single-stranded, linear DNA. It also seems to bind ATP. This Chlorobaculum parvum (strain DSM 263 / NCIMB 8327) (Chlorobium vibrioforme subsp. thiosulfatophilum) protein is DNA replication and repair protein RecF.